The primary structure comprises 477 residues: Stromelysin-1 (477 aa).

The N-terminal stretch at 1–17 (MKSLPILLLLCVAVCSA) is a signal peptide. Positions 18–99 (YPLDGAARGE…PRCGVPDVGH (82 aa)) are cleaved as a propeptide — activation peptide. Residues 90–97 (PRCGVPDV) carry the Cysteine switch motif. Position 92 (Cys92) interacts with Zn(2+). Residues Asp124 and Asp158 each coordinate Ca(2+). Zn(2+) is bound by residues His168 and Asp170. Residues Asp175, Gly176, Gly178, and Val180 each contribute to the Ca(2+) site. Zn(2+) is bound at residue His183. 3 residues coordinate Ca(2+): Gly190, Asn192, and Asp194. His196 lines the Zn(2+) pocket. 3 residues coordinate Ca(2+): Asp198, Asp199, and Glu201. His218 serves as a coordination point for Zn(2+). Residue Glu219 is part of the active site. Zn(2+) contacts are provided by His222 and His228. Residues 262–287 (LYGPPPDSPETPLVPTEPVPPEPGTP) are disordered. Residues 276–285 (PTEPVPPEPG) are compositionally biased toward pro residues. 4 Hemopexin repeats span residues 287–336 (PANC…WPSL), 337–383 (PSGV…GFPP), 385–433 (VRKI…FPGI), and 434–477 (DSKI…WLNC). The cysteines at positions 290 and 477 are disulfide-linked. A Ca(2+)-binding site is contributed by Asp297. Ca(2+) contacts are provided by Asp389 and Asp438.

It belongs to the peptidase M10A family. Ca(2+) serves as cofactor. Requires Zn(2+) as cofactor. Directly cleaved by HTRA2 to produce active form.

It is found in the secreted. The protein localises to the extracellular space. It localises to the extracellular matrix. Its subcellular location is the nucleus. The protein resides in the cytoplasm. It carries out the reaction Preferential cleavage where P1', P2' and P3' are hydrophobic residues.. With respect to regulation, enzymatic activity is activated by HTRA2 in dopaminergic cells upon mitochondrial stress. Functionally, metalloproteinase with a rather broad substrate specificity that can degrade fibronectin, laminin, gelatins of type I, III, IV, and V; collagens III, IV, X, and IX, and cartilage proteoglycans. Activates different molecules including growth factors, plasminogen or other matrix metalloproteinases such as MMP9. Once released into the extracellular matrix (ECM), the inactive pro-enzyme is activated by the plasmin cascade signaling pathway. Also acts intracellularly. For example, in dopaminergic neurons, gets activated by the serine protease HTRA2 upon stress and plays a pivotal role in DA neuronal degeneration by mediating microglial activation and alpha-synuclein/SNCA cleavage. In addition, plays a role in immune response and possesses antiviral activity against various viruses such as vesicular stomatitis virus, influenza A virus (H1N1) and human herpes virus 1. Mechanistically, translocates from the cytoplasm into the cell nucleus upon virus infection to influence NF-kappa-B activities. In Homo sapiens (Human), this protein is Stromelysin-1 (MMP3).